The chain runs to 887 residues: 3-hydroxy-3-methylglutaryl-coenzyme A reductase (887 aa).

Over 1-9 the chain is Cytoplasmic; that stretch reads MLSRLFRMH. The helical transmembrane segment at 10–39 threads the bilayer; the sequence is GLFVASHPWEVIVGTVTLTICMMSMNMFTG. Over 40–56 the chain is Lumenal; the sequence is NNKICGWNYECPKFEED. The helical transmembrane segment at 57–78 threads the bilayer; the sequence is VLSSDIIILTITRCIAILYIYF. The region spanning 61–218 is the SSD domain; the sequence is DIIILTITRC…MTFFPACVSL (158 aa). The short motif at 75-78 is the INSIG-binding motif element; sequence YIYF. Residues 79 to 89 lie on the Cytoplasmic side of the membrane; that stretch reads QFQNLRQLGSK. Lys-89 participates in a covalent cross-link: Glycyl lysine isopeptide (Lys-Gly) (interchain with G-Cter in ubiquitin). The chain crosses the membrane as a helical span at residues 90–114; sequence YILGIAGLFTIFSSFVFSTVVIHFL. The Lumenal segment spans residues 115–123; the sequence is DKELTGLNE. The chain crosses the membrane as a helical span at residues 124–149; it reads ALPFFLLLIDLSRASALAKFALSSNS. Residues 150–159 are Cytoplasmic-facing; the sequence is QDEVRENIAR. A helical transmembrane segment spans residues 160–187; the sequence is GMAILGPTFTLDALVECLVIGVGTMSGV. Topologically, residues 188 to 191 are lumenal; the sequence is RQLE. The helical transmembrane segment at 192 to 220 threads the bilayer; it reads IMCCFGCMSVLANYFVFMTFFPACVSLVL. Residues 221-248 are Cytoplasmic-facing; the sequence is ELSRESREGRPIWQLSHFARVLEEEENK. Lys-248 participates in a covalent cross-link: Glycyl lysine isopeptide (Lys-Gly) (interchain with G-Cter in ubiquitin). The helical transmembrane segment at 249 to 275 threads the bilayer; it reads PNPVTQRVKMIMSLGLVLVHAHSRWIA. Topologically, residues 276 to 314 are lumenal; that stretch reads DPSPQNSTAEQAKVSLGLDEDVSKRIEPSVSLWQFYLSK. The N-linked (GlcNAc...) asparagine glycan is linked to Asn-281. The helical transmembrane segment at 315 to 339 threads the bilayer; that stretch reads MISMDIEQVITLSLAFLLAVKYIFF. Residues 340–887 are Cytoplasmic-facing; sequence EQAETESTLS…LQGTCTKKAA (548 aa). Active-site charge relay system residues include Glu-558, Lys-690, and Asp-766. Catalysis depends on His-865, which acts as the Proton donor. Ser-871 carries the phosphoserine modification.

This sequence belongs to the HMG-CoA reductase family. Homotetramer. Homodimer. Interacts (via its SSD) with INSIG1; the interaction, accelerated by sterols, leads to the recruitment of HMGCR to AMFR/gp78 for its ubiquitination by the sterol-mediated ERAD pathway. Interacts with UBIAD1. Undergoes sterol-mediated ubiquitination and ER-associated degradation (ERAD). Accumulation of sterols in the endoplasmic reticulum (ER) membrane, triggers binding of the reductase to the ER membrane protein INSIG1 or INSIG2. The INSIG1 binding leads to the recruitment of the ubiquitin ligase, AMFR/gp78, RNF139 or RNF145, initiating ubiquitination of the reductase. The ubiquitinated reductase is then extracted from the ER membrane and delivered to cytosolic 26S proteosomes by a mechanism probably mediated by the ATPase Valosin-containing protein VCP/p97. The INSIG2-binding leads to the recruitment of the ubiquitin ligase RNF139, initiating ubiquitination of the reductase. Lys-248 is the main site of ubiquitination. Ubiquitination is enhanced by the presence of a geranylgeranylated protein. In terms of processing, N-glycosylated. Deglycosylated by NGLY1 on release from the endoplasmic reticulum (ER) in a sterol-mediated manner. Post-translationally, phosphorylated. Phosphorylation at Ser-871 reduces the catalytic activity.

It localises to the endoplasmic reticulum membrane. The protein localises to the peroxisome membrane. The enzyme catalyses (R)-mevalonate + 2 NADP(+) + CoA = (3S)-3-hydroxy-3-methylglutaryl-CoA + 2 NADPH + 2 H(+). It participates in metabolic intermediate biosynthesis; (R)-mevalonate biosynthesis; (R)-mevalonate from acetyl-CoA: step 3/3. Its activity is regulated as follows. Regulated by a negative feedback mechanism through sterols and non-sterol metabolites derived from mevalonate. Phosphorylation at Ser-871 down-regulates the catalytic activity. In terms of biological role, catalyzes the conversion of (3S)-hydroxy-3-methylglutaryl-CoA (HMG-CoA) to mevalonic acid, the rate-limiting step in the synthesis of cholesterol and other isoprenoids, thus plays a critical role in cellular cholesterol homeostasis. This Mus musculus (Mouse) protein is 3-hydroxy-3-methylglutaryl-coenzyme A reductase (Hmgcr).